The following is a 464-amino-acid chain: Trigger factor (464 aa).

The PPIase FKBP-type domain occupies 162 to 243; that stretch reads GDFVSIDLSA…VKSVKERELP (82 aa). A disordered region spans residues 431-464; it reads IDTSEFFGKRPSGDGAADEDADQADESTTADAGE. Residues 446 to 455 show a composition bias toward acidic residues; sequence AADEDADQAD.

It belongs to the FKBP-type PPIase family. Tig subfamily.

It localises to the cytoplasm. It carries out the reaction [protein]-peptidylproline (omega=180) = [protein]-peptidylproline (omega=0). Involved in protein export. Acts as a chaperone by maintaining the newly synthesized protein in an open conformation. Functions as a peptidyl-prolyl cis-trans isomerase. The sequence is that of Trigger factor from Mycobacterium avium (strain 104).